Here is a 1072-residue protein sequence, read N- to C-terminus: Guanylyl cyclase C (1072 aa).

An N-terminal signal peptide occupies residues 1–22; sequence MTSLLGLAVRLLLFQPTLMFWA. Over 23 to 429 the chain is Extracellular; it reads SQVRQKCHNG…PNDVPGLGPQ (407 aa). N-linked (GlcNAc...) asparagine glycans are attached at residues Asn-31, Asn-74, Asn-78, Asn-187, Asn-194, Asn-306, and Asn-401. Residues 430-453 form a helical membrane-spanning segment; sequence ILMIAVFTLTGIVVVLLLIALLVL. Residues 454-1072 lie on the Cytoplasmic side of the membrane; it reads RKYRRDHELR…NNSDHDSTYF (619 aa). In terms of domain architecture, Protein kinase spans 488–748; the sequence is LKIDDDRRRD…KIESTLAKIF (261 aa). The 131-residue stretch at 823 to 953 folds into the Guanylate cyclase domain; sequence TIYFSDIVGF…DTVNTASRME (131 aa).

The protein belongs to the adenylyl cyclase class-4/guanylyl cyclase family. As to quaternary structure, homotrimer. Interacts via its C-terminal region with PDZK2. Interacts with the lectin chaperone VIP36. In terms of processing, glycosylation at Asn-74 and/or Asn-78 is required for interaction with VIP36 while glycosylation at Asn-401 modulates ligand-mediated GC-C activation.

Its subcellular location is the cell membrane. The protein localises to the endoplasmic reticulum membrane. The catalysed reaction is GTP = 3',5'-cyclic GMP + diphosphate. Its function is as follows. Guanylyl cyclase that catalyzes synthesis of cyclic GMP (cGMP) from GTP. Receptor for the E.coli heat-stable enterotoxin; E.coli enterotoxin markedly stimulates the accumulation of cGMP in mammalian cells expressing GUCY2C. The polypeptide is Guanylyl cyclase C (Gucy2c) (Rattus norvegicus (Rat)).